A 239-amino-acid polypeptide reads, in one-letter code: Ribosomal RNA large subunit methyltransferase E (239 aa).

Glycine 88, tryptophan 90, aspartate 111, aspartate 127, and aspartate 151 together coordinate S-adenosyl-L-methionine. Lysine 191 serves as the catalytic Proton acceptor.

It belongs to the class I-like SAM-binding methyltransferase superfamily. RNA methyltransferase RlmE family.

It is found in the cytoplasm. It carries out the reaction uridine(2552) in 23S rRNA + S-adenosyl-L-methionine = 2'-O-methyluridine(2552) in 23S rRNA + S-adenosyl-L-homocysteine + H(+). Functionally, specifically methylates the uridine in position 2552 of 23S rRNA at the 2'-O position of the ribose in the fully assembled 50S ribosomal subunit. The polypeptide is Ribosomal RNA large subunit methyltransferase E (Bartonella bacilliformis (strain ATCC 35685 / KC583 / Herrer 020/F12,63)).